Reading from the N-terminus, the 245-residue chain is 14-3-3 protein zeta/delta (245 aa).

M1 is subject to N-acetylmethionine. K3 bears the N6-acetyllysine mark. Phosphoserine; by PKA is present on S58. K68 is subject to N6-acetyllysine. Residues S184, S207, and S210 each carry the phosphoserine modification. Position 232 is a phosphothreonine; by CK1 (T232).

Belongs to the 14-3-3 family. Interacts with CDK16 and BSPRY. Interacts with WEE1 (C-terminal). Interacts with SAMSN1. Interacts with MLF1 (phosphorylated form); the interaction retains it in the cytoplasm. Interacts with Thr-phosphorylated ITGB2. Interacts with BCL2L11. Homodimer. Heterodimerizes with YWHAE. Homo- and heterodimerization is inhibited by phosphorylation on Ser-58. Interacts with FOXO4, NOXA1, SSH1 and ARHGEF2. Interacts with Pseudomonas aeruginosa exoS (unphosphorylated form). Interacts with BAX; the interaction occurs in the cytoplasm. Under stress conditions, MAPK8-mediated phosphorylation releases BAX to mitochondria. Interacts with phosphorylated RAF1; the interaction is inhibited when YWHAZ is phosphorylated on Thr-232. Interacts with TP53; the interaction enhances p53 transcriptional activity. The Ser-58 phosphorylated form inhibits this interaction and p53 transcriptional activity. Interacts with ABL1 (phosphorylated form); the interaction retains ABL1 in the cytoplasm. Interacts with PKA-phosphorylated AANAT; the interaction modulates AANAT enzymatic activity by increasing affinity for arylalkylamines and acetyl-CoA and protecting the enzyme from dephosphorylation and proteasomal degradation. It may also prevent thiol-dependent inactivation. Interacts with AKT1; the interaction phosphorylates YWHAZ and modulates dimerization. Interacts with GAB2 and TLK2. Interacts with the 'Thr-369' phosphorylated form of DAPK2. Interacts with PI4KB, TBC1D22A and TBC1D22B. Interacts with ZFP36L1 (via phosphorylated form); this interaction occurs in a p38 MAPK- and AKT-signaling pathways. Interacts with SLITRK1. Interacts with AK5, LDB1, MADD, MARK3, PDE1A and SMARCB1. Interacts with YWHAZ. Interacts with MEFV. Interacts with ADAM22 (via C-terminus). In terms of processing, the delta, brain-specific form differs from the zeta form in being phosphorylated. Phosphorylation on Ser-184 by MAPK8; promotes dissociation of BAX and translocation of BAX to mitochondria. Phosphorylation on Thr-232; inhibits binding of RAF1. Phosphorylated on Ser-58 by PKA and protein kinase C delta type catalytic subunit in a sphingosine-dependent fashion. Phosphorylation on Ser-58 by PKA; disrupts homodimerization and heterodimerization with YHAE and TP53. Highly expressed in brain (at protein level).

The protein resides in the cytoplasm. Its subcellular location is the melanosome. Its function is as follows. Adapter protein implicated in the regulation of a large spectrum of both general and specialized signaling pathways. Binds to a large number of partners, usually by recognition of a phosphoserine or phosphothreonine motif. Binding generally results in the modulation of the activity of the binding partner. Promotes cytosolic retention and inactivation of TFEB transcription factor by binding to phosphorylated TFEB. Induces ARHGEF7 activity on RAC1 as well as lamellipodia and membrane ruffle formation. In neurons, regulates spine maturation through the modulation of ARHGEF7 activity. The sequence is that of 14-3-3 protein zeta/delta (YWHAZ) from Ovis aries (Sheep).